The chain runs to 312 residues: Malate dehydrogenase (312 aa).

NAD(+) contacts are provided by residues 12-17 (GAGFTG) and Asp-36. Residues Arg-87 and Arg-93 each contribute to the substrate site. NAD(+) contacts are provided by residues Asn-100 and 123-125 (LTN). Residue Asn-125 coordinates substrate. Ser-149 carries the phosphoserine modification. Arg-156 is a binding site for substrate. His-180 serves as the catalytic Proton acceptor.

It belongs to the LDH/MDH superfamily. MDH type 3 family.

It catalyses the reaction (S)-malate + NAD(+) = oxaloacetate + NADH + H(+). Its function is as follows. Catalyzes the reversible oxidation of malate to oxaloacetate. This chain is Malate dehydrogenase, found in Geobacillus sp. (strain WCH70).